An 842-amino-acid chain; its full sequence is Leucine--tRNA ligase (842 aa).

Positions 44-55 (PYPSANGLHVGH) match the 'HIGH' region motif. Positions 619 to 623 (KMSKS) match the 'KMSKS' region motif. Position 622 (Lys622) interacts with ATP.

Belongs to the class-I aminoacyl-tRNA synthetase family.

The protein localises to the cytoplasm. The enzyme catalyses tRNA(Leu) + L-leucine + ATP = L-leucyl-tRNA(Leu) + AMP + diphosphate. The chain is Leucine--tRNA ligase from Borrelia turicatae (strain 91E135).